Consider the following 464-residue polypeptide: MMARRDPKSWAKRLVRAQTLQKQRRAPVGPRAPPPDEEDPRLKCKNCGAFGHTARSTRCPMKCWKAALVPATLGKKEGKENLKPWKPRVEANPGPLNKDKGEKEERPRQQDPQRKALLHMFSGKPPEKPLPNGKGSTESSDHLRVASGPMPVHTTSKRPRVDPVLADRSAAEMSGRGSVLASLSPLRKASLSSSSSLGPKERQTGAAADMPQPAVRHQGREPLLVVKPTHSSPEGGCREVPQAASKTHGLLQAARPQAQDKRPAVTSQPCPPAATHSLGLGSNLSFGPGAKRPAQAPIQACLNFPKKPRLGPFQIPESAIQGGELGAPENLQPPPAATELGPSTSPQMGRRTPAQVPSVDRQPPHSTPCLPTAQACTMSHHSAASHDGAQPLRVLFRRLENGRWSSSLLAAPSFHSPEKPGTFLAQSPHVSEKSEAPCVRVPPSVLYEDLQVSSSSEDSDSDLE.

Disordered regions lie at residues 1 to 42 (MMAR…DPRL), 70 to 389 (PATL…HDGA), and 411 to 437 (APSF…SEAP). Basic and acidic residues-rich tracts occupy residues 74 to 89 (GKKE…KPRV) and 97 to 114 (NKDK…DPQR). Residues 180–197 (LASLSPLRKASLSSSSSL) are compositionally biased toward low complexity.

This sequence belongs to the FAM90 family.

This Homo sapiens (Human) protein is Protein FAM90A9 (FAM90A9).